A 90-amino-acid polypeptide reads, in one-letter code: Small ribosomal subunit protein uS15 (90 aa).

This sequence belongs to the universal ribosomal protein uS15 family. In terms of assembly, part of the 30S ribosomal subunit. Forms a bridge to the 50S subunit in the 70S ribosome, contacting the 23S rRNA.

One of the primary rRNA binding proteins, it binds directly to 16S rRNA where it helps nucleate assembly of the platform of the 30S subunit by binding and bridging several RNA helices of the 16S rRNA. Functionally, forms an intersubunit bridge (bridge B4) with the 23S rRNA of the 50S subunit in the ribosome. The polypeptide is Small ribosomal subunit protein uS15 (Helicobacter hepaticus (strain ATCC 51449 / 3B1)).